Reading from the N-terminus, the 656-residue chain is Ribosome quality control complex subunit 1 (656 aa).

Residues 1 to 11 (MSSRALRKLQR) are compositionally biased toward basic residues. Disordered stretches follow at residues 1–35 (MSSR…FSST), 51–122 (NNAI…LESS), and 634–656 (LFTS…GQGD). Positions 17 to 32 (LLEEALDSESDEDDEF) are enriched in acidic residues. Positions 51–63 (NNAINSEAEKSVS) are enriched in basic and acidic residues. Ser56, Ser61, and Ser63 each carry phosphoserine. Positions 83-101 (KKAKNKKKKKKQQKKKKVT) are enriched in basic residues. Basic and acidic residues predominate over residues 102 to 122 (GKRDLDNQSSDNEKLEGLESS). Residues Ser110 and Ser111 each carry the phosphoserine modification.

Belongs to the TCF25 family. In terms of assembly, component of the ribosome quality control complex (RQC), composed of the E3 ubiquitin ligase rkr1/ltn1, rqc1 and mtr1/rqc2, as well as cdc48 and its ubiquitin-binding cofactors. RQC forms a stable complex with 60S ribosomal subunits.

It is found in the cytoplasm. Component of the ribosome quality control complex (RQC), a ribosome-associated complex that mediates ubiquitination and extraction of incompletely synthesized nascent chains for proteasomal degradation. Within the RQC complex, rqc1 is essential for the recruitment of cdc48 to incompletely synthesized nascent polypeptides that are ubiquitinated by rkr1/ltn1. The protein is Ribosome quality control complex subunit 1 of Schizosaccharomyces pombe (strain 972 / ATCC 24843) (Fission yeast).